A 177-amino-acid polypeptide reads, in one-letter code: NAD(P)H-quinone oxidoreductase subunit 6, chloroplastic (177 aa).

5 consecutive transmembrane segments (helical) span residues 10-30 (VLLV…VLLT), 32-52 (PIYS…FYIL), 61-81 (AQLL…VMFM), 90-112 (FYLW…FSLI), and 152-172 (FYLP…GAIT).

This sequence belongs to the complex I subunit 6 family. NDH is composed of at least 16 different subunits, 5 of which are encoded in the nucleus.

The protein resides in the plastid. The protein localises to the chloroplast thylakoid membrane. The enzyme catalyses a plastoquinone + NADH + (n+1) H(+)(in) = a plastoquinol + NAD(+) + n H(+)(out). It carries out the reaction a plastoquinone + NADPH + (n+1) H(+)(in) = a plastoquinol + NADP(+) + n H(+)(out). Functionally, NDH shuttles electrons from NAD(P)H:plastoquinone, via FMN and iron-sulfur (Fe-S) centers, to quinones in the photosynthetic chain and possibly in a chloroplast respiratory chain. The immediate electron acceptor for the enzyme in this species is believed to be plastoquinone. Couples the redox reaction to proton translocation, and thus conserves the redox energy in a proton gradient. This Acorus calamus var. americanus (American sweet flag) protein is NAD(P)H-quinone oxidoreductase subunit 6, chloroplastic (ndhG).